A 273-amino-acid polypeptide reads, in one-letter code: Glutamate transport system permease protein GluD (273 aa).

5 consecutive transmembrane segments (helical) span residues 26–46 (ILPG…LALV), 64–84 (WFCA…LMIF), 100–120 (LAFA…IAEI), 150–170 (ILLP…MVIA), and 200–220 (LAAL…LTAL). The region spanning 30–221 (LWGTLKSAVF…VLNFSLTALA (192 aa)) is the ABC transmembrane type-1 domain. A disordered region spans residues 242–273 (PEQPDQGLETKDNVNVDWQDPDYKDLKTPGVQ). Basic and acidic residues predominate over residues 262 to 273 (PDYKDLKTPGVQ).

The protein belongs to the binding-protein-dependent transport system permease family. HisMQ subfamily. As to quaternary structure, the complex is composed of two ATP-binding proteins (GluA), two transmembrane proteins (GluC and GluD) and a solute-binding protein (GluB).

It is found in the cell membrane. Functionally, part of the ABC transporter complex GluABCD involved in glutamate uptake. Probably responsible for the translocation of the substrate across the membrane. This chain is Glutamate transport system permease protein GluD, found in Corynebacterium glutamicum (strain ATCC 13032 / DSM 20300 / JCM 1318 / BCRC 11384 / CCUG 27702 / LMG 3730 / NBRC 12168 / NCIMB 10025 / NRRL B-2784 / 534).